The following is a 159-amino-acid chain: Cytochrome c-type biogenesis protein CcmE (159 aa).

Residues Met1 to Arg8 are Cytoplasmic-facing. Residues Leu9 to Ala29 traverse the membrane as a helical; Signal-anchor for type II membrane protein segment. At Leu30 to Tyr159 the chain is on the periplasmic side. Heme-binding residues include His124 and Tyr128. Residues Glu135–Tyr159 are disordered. The span at Ala136–Tyr159 shows a compositional bias: basic and acidic residues.

It belongs to the CcmE/CycJ family.

The protein localises to the cell inner membrane. Heme chaperone required for the biogenesis of c-type cytochromes. Transiently binds heme delivered by CcmC and transfers the heme to apo-cytochromes in a process facilitated by CcmF and CcmH. This chain is Cytochrome c-type biogenesis protein CcmE, found in Marinobacter nauticus (strain ATCC 700491 / DSM 11845 / VT8) (Marinobacter aquaeolei).